The chain runs to 211 residues: 2,3-bisphosphoglycerate-dependent phosphoglycerate mutase (211 aa).

Substrate is bound by residues 9–16, 22–23, Arg-61, 88–91, Lys-99, 115–116, and 159–160; these read RHGQSDWN, TG, ERDY, RR, and GN. Residue His-10 is the Tele-phosphohistidine intermediate of the active site. The Proton donor/acceptor role is filled by Glu-88.

This sequence belongs to the phosphoglycerate mutase family. BPG-dependent PGAM subfamily. In terms of assembly, homodimer.

It carries out the reaction (2R)-2-phosphoglycerate = (2R)-3-phosphoglycerate. Its pathway is carbohydrate degradation; glycolysis; pyruvate from D-glyceraldehyde 3-phosphate: step 3/5. Catalyzes the interconversion of 2-phosphoglycerate and 3-phosphoglycerate. This chain is 2,3-bisphosphoglycerate-dependent phosphoglycerate mutase, found in Rhizobium johnstonii (strain DSM 114642 / LMG 32736 / 3841) (Rhizobium leguminosarum bv. viciae).